A 206-amino-acid polypeptide reads, in one-letter code: N-(5'-phosphoribosyl)anthranilate isomerase (206 aa).

The protein belongs to the TrpF family.

It catalyses the reaction N-(5-phospho-beta-D-ribosyl)anthranilate = 1-(2-carboxyphenylamino)-1-deoxy-D-ribulose 5-phosphate. Its pathway is amino-acid biosynthesis; L-tryptophan biosynthesis; L-tryptophan from chorismate: step 3/5. The protein is N-(5'-phosphoribosyl)anthranilate isomerase of Nitrosococcus oceani (strain ATCC 19707 / BCRC 17464 / JCM 30415 / NCIMB 11848 / C-107).